The following is a 360-amino-acid chain: S-adenosylmethionine:tRNA ribosyltransferase-isomerase (360 aa).

Belongs to the QueA family. As to quaternary structure, monomer.

It is found in the cytoplasm. It catalyses the reaction 7-aminomethyl-7-carbaguanosine(34) in tRNA + S-adenosyl-L-methionine = epoxyqueuosine(34) in tRNA + adenine + L-methionine + 2 H(+). The protein operates within tRNA modification; tRNA-queuosine biosynthesis. Functionally, transfers and isomerizes the ribose moiety from AdoMet to the 7-aminomethyl group of 7-deazaguanine (preQ1-tRNA) to give epoxyqueuosine (oQ-tRNA). The sequence is that of S-adenosylmethionine:tRNA ribosyltransferase-isomerase from Burkholderia pseudomallei (strain K96243).